A 255-amino-acid chain; its full sequence is Acetylglutamate kinase (255 aa).

Substrate is bound by residues 40-41 (GG), Arg-62, and Asn-153.

It belongs to the acetylglutamate kinase family. ArgB subfamily.

It localises to the cytoplasm. The enzyme catalyses N-acetyl-L-glutamate + ATP = N-acetyl-L-glutamyl 5-phosphate + ADP. It functions in the pathway amino-acid biosynthesis; L-arginine biosynthesis; N(2)-acetyl-L-ornithine from L-glutamate: step 2/4. Catalyzes the ATP-dependent phosphorylation of N-acetyl-L-glutamate. In Bacillus cereus (strain ATCC 14579 / DSM 31 / CCUG 7414 / JCM 2152 / NBRC 15305 / NCIMB 9373 / NCTC 2599 / NRRL B-3711), this protein is Acetylglutamate kinase.